The chain runs to 155 residues: Small ribosomal subunit protein uS7c (155 aa).

The protein belongs to the universal ribosomal protein uS7 family. As to quaternary structure, part of the 30S ribosomal subunit.

The protein resides in the plastid. It is found in the chloroplast. One of the primary rRNA binding proteins, it binds directly to 16S rRNA where it nucleates assembly of the head domain of the 30S subunit. This chain is Small ribosomal subunit protein uS7c (rps7), found in Marchantia polymorpha (Common liverwort).